The chain runs to 672 residues: Beta-galactosidase BgaB (672 aa).

Arg-109 is a substrate binding site. Position 113 (Cys-113) interacts with Zn(2+). A substrate-binding site is contributed by Asn-147. Glu-148 serves as the catalytic Proton donor. Zn(2+) is bound by residues Cys-156, Cys-158, and Cys-161. Catalysis depends on Glu-303, which acts as the Nucleophile. Substrate is bound by residues Trp-311 and 351-354 (EKFH).

Belongs to the glycosyl hydrolase 42 family.

It carries out the reaction Hydrolysis of terminal non-reducing beta-D-galactose residues in beta-D-galactosides.. This is Beta-galactosidase BgaB from Geobacillus sp. (strain Y412MC61).